The sequence spans 170 residues: ATP synthase subunit b, chloroplastic (170 aa).

The helical transmembrane segment at 15–35 (ILETNVINLAVVVGVVVFFVG) threads the bilayer.

The protein belongs to the ATPase B chain family. F-type ATPases have 2 components, F(1) - the catalytic core - and F(0) - the membrane proton channel. F(1) has five subunits: alpha(3), beta(3), gamma(1), delta(1), epsilon(1). F(0) has four main subunits: a(1), b(1), b'(1) and c(10-14). The alpha and beta chains form an alternating ring which encloses part of the gamma chain. F(1) is attached to F(0) by a central stalk formed by the gamma and epsilon chains, while a peripheral stalk is formed by the delta, b and b' chains.

The protein localises to the plastid. Its subcellular location is the chloroplast thylakoid membrane. F(1)F(0) ATP synthase produces ATP from ADP in the presence of a proton or sodium gradient. F-type ATPases consist of two structural domains, F(1) containing the extramembraneous catalytic core and F(0) containing the membrane proton channel, linked together by a central stalk and a peripheral stalk. During catalysis, ATP synthesis in the catalytic domain of F(1) is coupled via a rotary mechanism of the central stalk subunits to proton translocation. Its function is as follows. Component of the F(0) channel, it forms part of the peripheral stalk, linking F(1) to F(0). This is ATP synthase subunit b, chloroplastic from Stigeoclonium helveticum (Green alga).